Consider the following 421-residue polypeptide: MEF2-activating motif and SAP domain-containing transcriptional regulator (421 aa).

The MEF2-binding motif lies at 12-28 (IIRSKFRSVLQLRIHRR). 3 disordered regions span residues 104-156 (PPEQ…PPSH), 188-296 (KAML…ASLT), and 322-406 (DQVE…ADLS). An SAP domain is found at 165–199 (LEELTVSELRQQLRLRGLPVSGTKAMLLERMRGGT). The span at 191-214 (LLERMRGGTPPRERPKPRREDKEA) shows a compositional bias: basic and acidic residues. The segment at 208-421 (RREDKEAAAP…LLWELLPDPW (214 aa)) is transcription activation. Residues 230–241 (RLPSTVKASATN) show a composition bias toward polar residues. Over residues 260–292 (ASVPAPTPSPALAPTPTPAPVPAPAPAPFPTPP) the composition is skewed to pro residues. The span at 347 to 372 (SPDSEGFSSVFSSSLPSPTSSLSPSP) shows a compositional bias: low complexity.

As to quaternary structure, interacts with MEF2C. As to expression, expressed in skeletal muscle, brain, placenta and spleen.

Its subcellular location is the nucleus. Its function is as follows. Transcriptional coactivator. Stimulates the transcriptional activity of MEF2C. Stimulates MYOD1 activity in part via MEF2, resulting in an enhancement of skeletal muscle differentiation. The sequence is that of MEF2-activating motif and SAP domain-containing transcriptional regulator (Mamstr) from Mus musculus (Mouse).